The primary structure comprises 491 residues: Delayed-rectifier potassium channel regulatory subunit KCNS3 (491 aa).

At 1 to 182 (MVFGEFFHRP…IRMENPAYCL (182 aa)) the chain is on the cytoplasmic side. The chain crosses the membrane as a helical span at residues 183–204 (SAKLIAISSLSVVLASIVAMCV). The Extracellular segment spans residues 205–220 (HSMSEFQNEDGEVDDP). The chain crosses the membrane as a helical span at residues 221-243 (VLEGVEIACIAWFTGELAIRLVA). The Cytoplasmic segment spans residues 244 to 254 (APSQKKFWKNP). A helical transmembrane segment spans residues 255 to 275 (LNIIDFVSIIPFYATLAVDTK). At 276–285 (EEESEDIENM) the chain is on the extracellular side. Residues 286-306 (GKVVQILRLMRIFRILKLARH) form a helical; Voltage-sensor membrane-spanning segment. The Cytoplasmic portion of the chain corresponds to 307–321 (SVGLRSLGATLRHSY). A helical membrane pass occupies residues 322–343 (HEVGLLLLFLSVGISIFSVLIY). Residues 344-357 (SVEKDEHKSSLTSI) are Extracellular-facing. The segment at residues 358-369 (PICWWWATISMT) is an intramembrane region (helical). A Selectivity filter motif is present at residues 370-375 (TVGYGD). An intramembrane segment occupies 370 to 377 (TVGYGDTH). The Extracellular portion of the chain corresponds to 378–384 (PVTLAGK). Residues 385–413 (IIASTCIICGILVVALPITIIFNKFSKYY) traverse the membrane as a helical segment. The Cytoplasmic segment spans residues 414–491 (QKQKDMEVDQ…TASLENCTGK (78 aa)).

Belongs to the potassium channel family. S (TC 1.A.1.2) subfamily. Kv9.3/KCNS3 sub-subfamily. As to quaternary structure, heterotetramer with KCNB1. Does not form homomultimers.

The protein localises to the cell membrane. Potassium channel regulatory subunit that modulates the delayed rectifier potassium channel activity of KCNB1 by namely slowing down the deactivation and inactivation time constants. While it does not form functional channel on its own, it can form functional heterotetrameric channels with KCNB1. The chain is Delayed-rectifier potassium channel regulatory subunit KCNS3 from Mus musculus (Mouse).